Reading from the N-terminus, the 359-residue chain is Archaemetzincin-2 (359 aa).

Zn(2+) is bound at residue His254. Glu255 (proton acceptor) is an active-site residue. Zn(2+) is bound by residues His258, His264, Cys265, Cys270, Cys289, and Cys292.

The protein belongs to the peptidase M54 family. The cofactor is Zn(2+). In terms of tissue distribution, predominantly expressed in testis.

Its function is as follows. Probable zinc metalloprotease. The protein is Archaemetzincin-2 (Amz2) of Mus musculus (Mouse).